The following is a 322-amino-acid chain: Methionyl-tRNA formyltransferase (322 aa).

(6S)-5,6,7,8-tetrahydrofolate is bound at residue 112-115; sequence SLLP.

The protein belongs to the Fmt family.

It catalyses the reaction L-methionyl-tRNA(fMet) + (6R)-10-formyltetrahydrofolate = N-formyl-L-methionyl-tRNA(fMet) + (6S)-5,6,7,8-tetrahydrofolate + H(+). In terms of biological role, attaches a formyl group to the free amino group of methionyl-tRNA(fMet). The formyl group appears to play a dual role in the initiator identity of N-formylmethionyl-tRNA by promoting its recognition by IF2 and preventing the misappropriation of this tRNA by the elongation apparatus. The protein is Methionyl-tRNA formyltransferase of Synechococcus sp. (strain JA-2-3B'a(2-13)) (Cyanobacteria bacterium Yellowstone B-Prime).